The chain runs to 882 residues: Pyruvate dehydrogenase E1 component (882 aa).

Homodimer. Part of the PDH complex, consisting of multiple copies of pyruvate dehydrogenase (E1), dihydrolipoamide acetyltransferase (E2) and lipoamide dehydrogenase (E3). Requires thiamine diphosphate as cofactor.

The catalysed reaction is N(6)-[(R)-lipoyl]-L-lysyl-[protein] + pyruvate + H(+) = N(6)-[(R)-S(8)-acetyldihydrolipoyl]-L-lysyl-[protein] + CO2. In terms of biological role, component of the pyruvate dehydrogenase (PDH) complex, that catalyzes the overall conversion of pyruvate to acetyl-CoA and CO(2). This Pseudomonas aeruginosa (strain ATCC 15692 / DSM 22644 / CIP 104116 / JCM 14847 / LMG 12228 / 1C / PRS 101 / PAO1) protein is Pyruvate dehydrogenase E1 component (aceE).